The sequence spans 115 residues: Large ribosomal subunit protein bL19 (115 aa).

Belongs to the bacterial ribosomal protein bL19 family.

This protein is located at the 30S-50S ribosomal subunit interface and may play a role in the structure and function of the aminoacyl-tRNA binding site. The polypeptide is Large ribosomal subunit protein bL19 (Streptococcus sanguinis (strain SK36)).